Reading from the N-terminus, the 460-residue chain is Transcriptional regulatory protein UME1 (460 aa).

Positions 14 to 22 match the NEE-box motif; sequence NEEFKIWKK. 4 WD repeats span residues 233-271, 276-316, 339-379, and 411-451; these read PGIK…KPLW, SLDG…ALGD, FYSE…AIYN, and GENN…VLDG.

In terms of assembly, component of the RPD3C(L) complex composed of at least ASH1, CTI6, DEP1, PHO23, RPD3, RXT2, RXT3, SAP30, SDS3, SIN3, UME1 and UME6. Component of the RPD3C(S) complex composed of at least EAF3, RCO1, RPD3, SIN3, and UME1. Interacts with RPD3.

The protein resides in the cytoplasm. The protein localises to the nucleus. Catalytic component of the RPD3 histone deacetylase complexes RPD3C(L) and RPD3C(S) responsible for the deacetylation of lysine residues on the N-terminal part of the core histones (H2A, H2B, H3 and H4). Histone deacetylation gives a tag for epigenetic repression and plays an important role in transcriptional regulation, cell cycle progression and developmental events. This is Transcriptional regulatory protein UME1 (UME1) from Saccharomyces cerevisiae (strain ATCC 204508 / S288c) (Baker's yeast).